A 1607-amino-acid chain; its full sequence is Phosphatidylinositol 3-kinase piki-1 (1607 aa).

Residues 2–21 (SDDEELQLAIEISKKTFKDE) enclose the UIM domain. Disordered regions lie at residues 54–91 (EANS…HSQS), 105–128 (STSQ…KFPP), and 142–182 (PPPP…SFAS). Residues 58–69 (PGPSSYSGSLAT) are compositionally biased toward polar residues. Pro residues predominate over residues 158 to 169 (PPVPIHPTPPVS). The 92-residue stretch at 362–453 (ASTVKVVVYK…GDDVKLDLGV (92 aa)) folds into the PI3K-RBD domain. The 169-residue stretch at 598 to 766 (KMDFLQIMLN…KIWDTEIYFP (169 aa)) folds into the C2 PI3K-type domain. The PIK helical domain occupies 776–953 (PQDFATLDIE…AIRCQNLQQK (178 aa)). The 275-residue stretch at 1029-1303 (RIEECSVFNS…MIQNSLGSAF (275 aa)) folds into the PI3K/PI4K catalytic domain. The tract at residues 1035-1041 (VFNSNAK) is G-loop. The segment at 1168–1176 (GIGDRHNDN) is catalytic loop. An activation loop region spans residues 1187 to 1213 (HIDFGKYMGDWQMAAGFRRDRVPFVFT). The PX domain maps to 1344–1458 (GRISRVTVLK…TFFHSILRDN (115 aa)). In terms of domain architecture, C2 spans 1472–1601 (SQCQIYLKIE…KNCRTLEGWF (130 aa)).

The protein belongs to the PI3/PI4-kinase family.

It localises to the cell projection. The protein resides in the phagocytic cup. It is found in the cytoplasmic vesicle. The protein localises to the phagosome membrane. Its subcellular location is the cytoplasm. The catalysed reaction is a 1,2-diacyl-sn-glycero-3-phospho-(1D-myo-inositol) + ATP = a 1,2-diacyl-sn-glycero-3-phospho-(1D-myo-inositol-3-phosphate) + ADP + H(+). Its function is as follows. Phosphatidylinositol 3-kinase involved in clearance of apoptotic cell corpses by phagosomes. Phagosome maturation requires two sequential and non-overlapping pulses of phosphatidylinositol-3-phosphate (PI3P) on the vesicle surface which mediates recruitment of sortins snx-1 and lst-4 and small GTPases rab-5, rab-2 and rab-7. The first pulse is initiated by piki-1, then maintained by vps-34 which also produces the second pulse. Unlike vps-34, not involved in the formation of PI3P in early endosomes. The sequence is that of Phosphatidylinositol 3-kinase piki-1 from Caenorhabditis elegans.